The sequence spans 232 residues: Octanoyltransferase (232 aa).

One can recognise a BPL/LPL catalytic domain in the interval 32-219 (DTIYDTLILL…SFMVFNFSSC (188 aa)). Substrate contacts are provided by residues 77 to 84 (RGGDITYH), 140 to 142 (AIG), and 153 to 155 (GFA). The active-site Acyl-thioester intermediate is the cysteine 171.

Belongs to the LipB family.

It is found in the cytoplasm. It carries out the reaction octanoyl-[ACP] + L-lysyl-[protein] = N(6)-octanoyl-L-lysyl-[protein] + holo-[ACP] + H(+). Its pathway is protein modification; protein lipoylation via endogenous pathway; protein N(6)-(lipoyl)lysine from octanoyl-[acyl-carrier-protein]: step 1/2. Functionally, catalyzes the transfer of endogenously produced octanoic acid from octanoyl-acyl-carrier-protein onto the lipoyl domains of lipoate-dependent enzymes. Lipoyl-ACP can also act as a substrate although octanoyl-ACP is likely to be the physiological substrate. This is Octanoyltransferase from Dictyoglomus thermophilum (strain ATCC 35947 / DSM 3960 / H-6-12).